A 286-amino-acid chain; its full sequence is Deleted in azoospermia-like (286 aa).

The 76-residue stretch at 30-105 (NTVFVGGIDI…KKLKLGPAIR (76 aa)) folds into the RRM domain. Residues 155–180 (ACPYPSSPPMAIQQIPVGCQQPSYFQ) enclose the DAZ domain.

The protein belongs to the RRM DAZ family. Interacts with the C-terminus of pabp1 and with epabp. Prior to oocyte maturation, found in a complex with epabp and pum2 proteins and spdy1 mRNA; pum2 dissociates from the complex during maturation. In terms of tissue distribution, germ-line specific; expressed in adult testis and ovary. Localized specifically to the oocyte and embryonic germ plasm and to migrating primordial germ cells (PGCs).

The protein localises to the cytoplasm. Functionally, RNA-binding protein that is required for primordial germ cell (PGC) differentiation and indirectly necessary for the migration of PGCs through the endoderm. May promote meiotic cell division during spermatogenesis. Shows a preference for G- and U-rich RNAs and probably binds the 3'-UTR of target mRNAs. Stimulates the initiation of translation of mRNAs through the recruitment of poly(A)-binding proteins (PABPs). The protein is Deleted in azoospermia-like of Xenopus tropicalis (Western clawed frog).